The following is a 135-amino-acid chain: Large ribosomal subunit protein eL32 (135 aa).

Residue lysine 9 forms a Glycyl lysine isopeptide (Lys-Gly) (interchain with G-Cter in SUMO2) linkage. Lysine 50 is modified (N6-succinyllysine). The residue at position 62 (serine 62) is a Phosphoserine.

It belongs to the eukaryotic ribosomal protein eL32 family. Component of the large ribosomal subunit.

It localises to the cytoplasm. In terms of biological role, component of the large ribosomal subunit. The ribosome is a large ribonucleoprotein complex responsible for the synthesis of proteins in the cell. The polypeptide is Large ribosomal subunit protein eL32 (RPL32) (Macaca fascicularis (Crab-eating macaque)).